The following is a 321-amino-acid chain: MINAVDLHKVYQLKGREVVALRGVSLHVPQGEIYGVVGPSGAGKSTLLRCINLLERPDRGEIWVDGRNLTALPPPQLRAARRGIGMIHQHFALLSSRTVAGNVAFPLEIAGVPRAERRRRVAELLELVGLADKAAAYPAQLSGGQKQRVGIARALAPRPTVLLSDEATSALDPATTASILDLLRDLNRELGLTILLITHEMDVVKRICDAVAIMDRGSVVETGRTVDLLRTPGSLLARSLFAPPPVSGDGVVTLTWVDQAEEPLISQLTRLFDVDVSILGGALEEVAGHAVGRLTVRITGERSAEALTYLTDRNVLVEEVP.

The ABC transporter domain maps to 2–241; it reads INAVDLHKVY…PGSLLARSLF (240 aa). 38 to 45 serves as a coordination point for ATP; sequence GPSGAGKS.

Belongs to the ABC transporter superfamily. Methionine importer (TC 3.A.1.24) family. The complex is composed of two ATP-binding proteins (MetN), two transmembrane proteins (MetI) and a solute-binding protein (MetQ).

The protein localises to the cell membrane. The enzyme catalyses L-methionine(out) + ATP + H2O = L-methionine(in) + ADP + phosphate + H(+). It carries out the reaction D-methionine(out) + ATP + H2O = D-methionine(in) + ADP + phosphate + H(+). Functionally, part of the ABC transporter complex MetNIQ involved in methionine import. Responsible for energy coupling to the transport system. The chain is Methionine import ATP-binding protein MetN from Thermobifida fusca (strain YX).